A 307-amino-acid polypeptide reads, in one-letter code: MAALYACTKCHQRFPFEALSQGQQLCKECRIAHPIVKCTYCRTEFQQESKTNTICKKCAQNVKLYGTPKPCQYCNIIAAFIGNKCQRCTNSEKKYGPPHSCEQCKQQCAFDRKDDRKKVDGKLLCWLCTLSYKRVLQKTKEQCKHLSSSSRASLQEKEQYSRLSSGSHYNSQKTLSTSSIQNEIPKKKAKFDAISANGDSFSPDLALDSPGTDHFVIIAQLKEEVATLKKMLHQKDQMILEKEKKITELKADLQYQESQMRAKMNQMEKTHKEVMEQLQAKNRELLKQAAALSKGKKPEKSGAITSP.

Disordered regions lie at residues 161–181 and 287–307; these read SRLS…SSIQ and KQAA…ITSP. Residues 217–297 adopt a coiled-coil conformation; it reads IIAQLKEEVA…QAAALSKGKK (81 aa).

Belongs to the FAM76 family.

The sequence is that of Protein FAM76A (FAM76A) from Gallus gallus (Chicken).